Here is a 912-residue protein sequence, read N- to C-terminus: Protein translocase subunit SecA (912 aa).

ATP-binding positions include glutamine 87, 105–109 (GEGKT), and aspartate 512. Zn(2+)-binding residues include cysteine 896, cysteine 898, cysteine 907, and histidine 908.

It belongs to the SecA family. In terms of assembly, monomer and homodimer. Part of the essential Sec protein translocation apparatus which comprises SecA, SecYEG and auxiliary proteins SecDF-YajC and YidC. It depends on Zn(2+) as a cofactor.

The protein resides in the cell inner membrane. It localises to the cytoplasm. The enzyme catalyses ATP + H2O + cellular proteinSide 1 = ADP + phosphate + cellular proteinSide 2.. Its function is as follows. Part of the Sec protein translocase complex. Interacts with the SecYEG preprotein conducting channel. Has a central role in coupling the hydrolysis of ATP to the transfer of proteins into and across the cell membrane, serving both as a receptor for the preprotein-SecB complex and as an ATP-driven molecular motor driving the stepwise translocation of polypeptide chains across the membrane. The chain is Protein translocase subunit SecA from Pseudomonas fluorescens (strain Pf0-1).